The chain runs to 413 residues: UPF0754 membrane protein PCC7424_0748 (413 aa).

The next 2 membrane-spanning stretches (helical) occupy residues 3 to 23 (IALE…GAII) and 391 to 411 (IVNL…VILL).

Belongs to the UPF0754 family.

Its subcellular location is the cell inner membrane. This is UPF0754 membrane protein PCC7424_0748 from Gloeothece citriformis (strain PCC 7424) (Cyanothece sp. (strain PCC 7424)).